The sequence spans 31 residues: Kunitz-type serine protease inhibitor RsTIQ2 (31 aa).

The BPTI/Kunitz inhibitor domain occupies 1–31 (EAVDFDSQCVPTADPGKCKFYFPMWNVNVFT).

Its function is as follows. Serine protease inhibitor. Inhibits trypsin, elastase, plasmin and kallikrein. The protein is Kunitz-type serine protease inhibitor RsTIQ2 of Rhipicephalus sanguineus (Brown dog tick).